The primary structure comprises 243 residues: Venom nerve growth factor 2 (243 aa).

An N-terminal signal peptide occupies residues 1 to 18 (MSMLCYTLIIAFLIGIWA). Residues 19–125 (APKSEDNVPL…TLNRNIRAKR (107 aa)) constitute a propeptide that is removed on maturation. Over residues 47–66 (GLKTSRNTDQRHPAPKKAED) the composition is skewed to basic and acidic residues. Residues 47–67 (GLKTSRNTDQRHPAPKKAEDQ) are disordered. Disulfide bonds link Cys139–Cys204 and Cys192–Cys234. N-linked (GlcNAc...) asparagine glycosylation occurs at Asn148.

It belongs to the NGF-beta family. Homodimer; non-covalently linked. As to expression, expressed by the venom gland.

It is found in the secreted. In terms of biological role, nerve growth factor is important for the development and maintenance of the sympathetic and sensory nervous systems. It stimulates division and differentiation of sympathetic and embryonic sensory neurons as well as basal forebrain cholinergic neurons in the brain. Its relevance in the snake venom is not clear. However, it has been shown to inhibit metalloproteinase-dependent proteolysis of platelet glycoprotein Ib alpha, suggesting a metalloproteinase inhibition to prevent metalloprotease autodigestion and/or protection against prey proteases. Binds a lipid between the two protein chains in the homodimer. The lipid-bound form promotes histamine relase from mouse mast cells, contrary to the lipid-free form. The sequence is that of Venom nerve growth factor 2 from Pseudonaja textilis (Eastern brown snake).